A 338-amino-acid polypeptide reads, in one-letter code: Taste receptor type 2 member 39 (338 aa).

Topologically, residues 1-30 (MLGRCFPPDTKEKQQLRMTKLCDPAESELS) are extracellular. Residues 31–51 (PFLITLILAVLLAEYLIGIIA) traverse the membrane as a helical segment. The Cytoplasmic portion of the chain corresponds to 52-74 (NGFIMAIHAAEWVQNKAVSTSGR). The chain crosses the membrane as a helical span at residues 75–95 (ILVFLSVSRIALQSLMMLEIT). At 96-116 (ISSTSLSFYSEDAVYYAFKIS) the chain is on the extracellular side. A helical transmembrane segment spans residues 117–137 (FIFLNFCSLWFAAWLSFFYFV). Topologically, residues 138-156 (KIANFSYPLFLKLRWRITG) are cytoplasmic. A helical transmembrane segment spans residues 157 to 177 (LIPWLLWLSVFISFSHSMFCI). Residues 178–205 (NICTVYCNNSFPIHSSNSTKKTYLSEIN) lie on the Extracellular side of the membrane. Residues N185 and N194 are each glycosylated (N-linked (GlcNAc...) asparagine). A helical transmembrane segment spans residues 206–226 (VVGLAFFFNLGIVTPLIMFIL). At 227 to 262 (TATLLILSLKRHTLHMGSNATGSNDPSMEAHMGAIK) the chain is on the cytoplasmic side. Residues 263–283 (AISYFLILYIFNAVALFIYLS) form a helical membrane-spanning segment. Residues 284 to 291 (NMFDINSL) are Extracellular-facing. A helical transmembrane segment spans residues 292–312 (WNNLCQIIMAAYPAGHSILPI). Residues 313-338 (QDNPGLRRAWKRLQLRLHLYPKEWTL) lie on the Cytoplasmic side of the membrane.

Belongs to the G-protein coupled receptor T2R family.

It localises to the membrane. Functionally, receptor that may play a role in the perception of bitterness and is gustducin-linked. May play a role in sensing the chemical composition of the gastrointestinal content. The activity of this receptor may stimulate alpha gustducin, mediate PLC-beta-2 activation and lead to the gating of TRPM5. The chain is Taste receptor type 2 member 39 (TAS2R39) from Pan paniscus (Pygmy chimpanzee).